The sequence spans 465 residues: Protein unc-93 homolog A (465 aa).

The next 5 helical transmembrane spans lie at 8–28 (VLVVSFGFLLLFTAYGGLQSL), 40–60 (VISLSVIYAAIILSSMFLPPI), 71–91 (IVVSMGCYVAYSFGNLAPGWA), 96–118 (TSAILGMGGSPLWSAKCTYLTIS), and 140–160 (IFFFIFQSSGVWGNLMSSLIF). Asparagine 183 and asparagine 189 each carry an N-linked (GlcNAc...) asparagine glycan. Residues 200-220 (TLLGCYIGVGLLAIIFVAVFL) traverse the membrane as a helical segment. Asparagine 237 carries an N-linked (GlcNAc...) asparagine glycan. The next 5 helical transmembrane spans lie at 256–276 (LLLLIPLTMYSGFEQSFLSGE), 281–301 (YVTCALGIHNVGFVMICFAAS), 319–339 (IALFCLAAAINLGSFLGLLYW), 343–363 (PDQLAIFFVFPALWGMADAVW), and 410–427 (IYIALAVLALTMVTYLYV).

This sequence belongs to the unc-93 family.

It is found in the membrane. The chain is Protein unc-93 homolog A (unc93a) from Danio rerio (Zebrafish).